A 300-amino-acid polypeptide reads, in one-letter code: Protein THYLAKOID FORMATION 1, chloroplastic (300 aa).

Residues 1–67 constitute a chloroplast transit peptide; the sequence is MAATAISSLS…SNVTADVPPV (67 aa). Residues 68–196 are Chloroplast intermembrane-facing; sequence SETKSKFLKA…IAGRAGSKEG (129 aa). The chain crosses the membrane as a helical span at residues 197-219; it reads FSYSRFFAVGLFRLLELASATDP. Residues 220–300 lie on the Cytoplasmic side of the membrane; the sequence is TVLDKLCASL…NPSFLVERKS (81 aa). Residues 239 to 268 are a coiled coil; it reads DLDVYRNLLSKLVQAKELLKEYVEREKKKQ.

Belongs to the THF1 family. Interacts with GPA1. As to expression, ubiquitous. Present at higher level in hypocotyls (at protein level). Ubiquitously expressed in all organs, in roots of both light-grown and dark-grown seedlings. Highly expressed in the root apical meristems.

It localises to the plastid. The protein localises to the chloroplast outer membrane. Its subcellular location is the chloroplast stroma. Its function is as follows. Involved in a dynamic process of vesicle-mediated thylakoid membrane biogenesis. Required for the normal organization of vesicles into mature thylakoid stacks and ultimately for leaf development. Also involved in a sugar-signaling mechanism in roots by mediating signaling between the plasma membrane and the plastid. Probably acts downstream of the plasma membrane-delimited heterotrimeric G-protein GPA1 in a D-glucose signaling pathway. This is Protein THYLAKOID FORMATION 1, chloroplastic (THF1) from Arabidopsis thaliana (Mouse-ear cress).